The chain runs to 784 residues: LPS-assembly protein LptD (784 aa).

An N-terminal signal peptide occupies residues 1-24; sequence MKKRIPTLLATMIATALYSQQGLA. 2 disulfide bridges follow: Cys-31-Cys-724 and Cys-173-Cys-725.

The protein belongs to the LptD family. In terms of assembly, component of the lipopolysaccharide transport and assembly complex. Interacts with LptE and LptA. Contains two intramolecular disulfide bonds.

The protein resides in the cell outer membrane. Together with LptE, is involved in the assembly of lipopolysaccharide (LPS) at the surface of the outer membrane. This Shigella sonnei (strain Ss046) protein is LPS-assembly protein LptD.